Reading from the N-terminus, the 64-residue chain is Large ribosomal subunit protein uL29 (64 aa).

Belongs to the universal ribosomal protein uL29 family.

This is Large ribosomal subunit protein uL29 from Burkholderia mallei (strain NCTC 10247).